The chain runs to 432 residues: Histidine--tRNA ligase (432 aa).

This sequence belongs to the class-II aminoacyl-tRNA synthetase family.

The protein resides in the cytoplasm. It catalyses the reaction tRNA(His) + L-histidine + ATP = L-histidyl-tRNA(His) + AMP + diphosphate + H(+). The sequence is that of Histidine--tRNA ligase from Pyrococcus furiosus (strain ATCC 43587 / DSM 3638 / JCM 8422 / Vc1).